A 332-amino-acid polypeptide reads, in one-letter code: Very-long-chain 3-oxoacyl-CoA reductase (332 aa).

A helical transmembrane segment spans residues 15 to 35 (GQWALAGIGALYVATRVGAFL). 9 residues coordinate NADP(+): Val-60, Asp-115, Asp-123, Asn-142, Lys-177, Tyr-209, Lys-213, Val-242, and Thr-244. Tyr-209 serves as the catalytic Proton donor. Catalysis depends on Lys-213, which acts as the Lowers pKa of active site Tyr.

It belongs to the short-chain dehydrogenases/reductases (SDR) family.

Its subcellular location is the endoplasmic reticulum membrane. It carries out the reaction a very-long-chain (3R)-3-hydroxyacyl-CoA + NADP(+) = a very-long-chain 3-oxoacyl-CoA + NADPH + H(+). Its pathway is lipid metabolism; fatty acid biosynthesis. Its function is as follows. Component of the microsomal membrane bound fatty acid elongation system, which produces the 26-carbon very long-chain fatty acids (VLCFA) from palmitate. Catalyzes the reduction of the 3-ketoacyl-CoA intermediate that is formed in each cycle of fatty acid elongation. VLCFAs serve as precursors for ceramide and sphingolipids. This chain is Very-long-chain 3-oxoacyl-CoA reductase, found in Neurospora crassa (strain ATCC 24698 / 74-OR23-1A / CBS 708.71 / DSM 1257 / FGSC 987).